The chain runs to 341 residues: LIM and senescent cell antigen-like-containing domain protein 2 (341 aa).

5 consecutive LIM zinc-binding domains span residues 13-74 (AVCQ…LFAP), 76-133 (CGSC…EKAK), 138-195 (YICQ…KMGV), 196-255 (PICG…LFGD), and 256-315 (VCYN…FPLE). F22 is subject to Phosphoserine. T327 is subject to Phosphothreonine. The residue at position 328 (S328) is a Phosphoserine.

As to quaternary structure, interacts with TGFB1I1. Interacts with integrin-linked protein kinase 1 (ILK) via the first LIM domain, and in competition with LIMS1. Part of the heterotrimeric IPP complex composed of integrin-linked kinase (ILK), LIMS1 or LIMS2, and PARVA.

Its subcellular location is the nucleus. The protein resides in the cell junction. It is found in the focal adhesion. It localises to the cell membrane. In terms of biological role, adapter protein in a cytoplasmic complex linking beta-integrins to the actin cytoskeleton, bridges the complex to cell surface receptor tyrosine kinases and growth factor receptors. Plays a role in modulating cell spreading and migration. This Homo sapiens (Human) protein is LIM and senescent cell antigen-like-containing domain protein 2 (LIMS2).